Here is a 527-residue protein sequence, read N- to C-terminus: Hopanoid C-2 methylase (527 aa).

Positions 36 to 148 (VAAFMPPQGL…AKLTHDVTRP (113 aa)) constitute a B12-binding domain. The Radical SAM core domain maps to 173 to 408 (AECSKYLLGS…HDQVVAMWKD (236 aa)). [4Fe-4S] cluster contacts are provided by C189, C193, and C196.

It belongs to the radical SAM superfamily. It depends on [4Fe-4S] cluster as a cofactor.

Required for methylation of hopanoids at the C-2 position. This Rhodopseudomonas palustris (strain TIE-1) protein is Hopanoid C-2 methylase.